The primary structure comprises 183 residues: MAYTPRLKEEYKSRVISALKEEFGYTNVMQVPKLEKIVLSRGVGAAVSDKKLIDYAVDELTKITGQKAVSTISKKDVASFKLRKGMPIGAKVTLRGERMYEFLDRLITSALPRVRDFGGIKATGFDGRGNYNLGVLEQIIFPEIDIDKVNKISGMDITFVTTAKTDKEAKSLLAELGLPFKKN.

The protein belongs to the universal ribosomal protein uL5 family. Part of the 50S ribosomal subunit; part of the 5S rRNA/L5/L18/L25 subcomplex. Contacts the 5S rRNA and the P site tRNA. Forms a bridge to the 30S subunit in the 70S ribosome.

Functionally, this is one of the proteins that bind and probably mediate the attachment of the 5S RNA into the large ribosomal subunit, where it forms part of the central protuberance. In the 70S ribosome it contacts protein S13 of the 30S subunit (bridge B1b), connecting the 2 subunits; this bridge is implicated in subunit movement. Contacts the P site tRNA; the 5S rRNA and some of its associated proteins might help stabilize positioning of ribosome-bound tRNAs. This is Large ribosomal subunit protein uL5 from Flavobacterium johnsoniae (strain ATCC 17061 / DSM 2064 / JCM 8514 / BCRC 14874 / CCUG 350202 / NBRC 14942 / NCIMB 11054 / UW101) (Cytophaga johnsonae).